Consider the following 426-residue polypeptide: Glutamate-1-semialdehyde 2,1-aminomutase (426 aa).

Lysine 265 carries the post-translational modification N6-(pyridoxal phosphate)lysine.

The protein belongs to the class-III pyridoxal-phosphate-dependent aminotransferase family. HemL subfamily. In terms of assembly, homodimer. Pyridoxal 5'-phosphate is required as a cofactor.

The protein localises to the cytoplasm. It catalyses the reaction (S)-4-amino-5-oxopentanoate = 5-aminolevulinate. It functions in the pathway porphyrin-containing compound metabolism; protoporphyrin-IX biosynthesis; 5-aminolevulinate from L-glutamyl-tRNA(Glu): step 2/2. The sequence is that of Glutamate-1-semialdehyde 2,1-aminomutase from Escherichia coli O81 (strain ED1a).